The following is a 697-amino-acid chain: Exocyst complex component 7 (697 aa).

Residues 1–384 (MIPPQEASAR…FSTVLTVFPI (384 aa)) form an SEC8 and ARHQ binding region. 2 coiled-coil regions span residues 5–42 (QEAS…TRNM) and 63–85 (VHKQ…SCLD). Serine 133 is modified (phosphoserine). A disordered region spans residues 238 to 270 (FRKSSSSSGVPYSPAIPNKRKDTPTKKPIKRPG).

Belongs to the EXO70 family. As to quaternary structure, the exocyst complex is composed of EXOC1, EXOC2, EXOC3, EXOC4, EXOC5, EXOC6, EXOC7 and EXOC8. Interacts with RAB11FIP3. Interacts with ARHQ in a GTP-dependent manner.

Its subcellular location is the cytoplasm. The protein resides in the cytosol. It localises to the cell membrane. The protein localises to the midbody. It is found in the midbody ring. In terms of biological role, component of the exocyst complex involved in the docking of exocytic vesicles with fusion sites on the plasma membrane. In adipocytes, plays a crucial role in targeting SLC2A4 vesicle to the plasma membrane in response to insulin, perhaps directing the vesicle to the precise site of fusion. It is required for neuron survival and plays an essential role in cortical development. The sequence is that of Exocyst complex component 7 (Exoc7) from Mus musculus (Mouse).